The chain runs to 439 residues: O-methyltransferase aurJ (439 aa).

Residue aspartate 283 participates in S-adenosyl-L-methionine binding. Catalysis depends on histidine 338, which acts as the Proton acceptor.

The protein belongs to the class I-like SAM-binding methyltransferase superfamily. Cation-independent O-methyltransferase family. COMT subfamily.

It carries out the reaction norrubrofusarin + S-adenosyl-L-methionine = rubrofusarin + S-adenosyl-L-homocysteine + H(+). It functions in the pathway pigment biosynthesis. Its function is as follows. O-methyltransferase; part of the gene cluster that mediates the biosynthesis of aurofusarin, a red mycelium pigment which is acting as a mycotoxin. The first step is performed by the polyketide synthase which condenses one acetyl-CoA and 6 malonyl-CoA units to form the first intermediate, the cyclic heptaketide and yellow pigment YWA1. The C2 hydroxyl group in the pyrone ring of YWA1 is probably formed during ring closure by an aldol-type cyclization reaction. The dehydratase aurZ then acts as the first tailoring enzyme in the aurofusarin biosynthetic pathway by converting YWA1 to nor-rubrofusarin. Nor-rubrofusarin is then methylated to rubrofusarin by the O-methyltransferase aurJ. Rubrofusarin is then transported across the plasma membrane by the rubrofusarin-specific pump aurT for further enzymatic processing by the extracellular complex composed of GIP1, aurF, aurO and aurS to yield aurofusarin. The polypeptide is O-methyltransferase aurJ (Gibberella zeae (strain ATCC MYA-4620 / CBS 123657 / FGSC 9075 / NRRL 31084 / PH-1) (Wheat head blight fungus)).